Reading from the N-terminus, the 223-residue chain is uncharacterized protein (223 aa).

The N-terminal 12 residues, 1–12 (MFRSLVRKTTPL), are a transit peptide targeting the mitochondrion.

The protein resides in the mitochondrion. This is an uncharacterized protein from Candida albicans (strain WO-1) (Yeast).